The primary structure comprises 294 residues: Elongation factor Ts (294 aa).

An involved in Mg(2+) ion dislocation from EF-Tu region spans residues Thr79–Val82.

This sequence belongs to the EF-Ts family.

It is found in the cytoplasm. Functionally, associates with the EF-Tu.GDP complex and induces the exchange of GDP to GTP. It remains bound to the aminoacyl-tRNA.EF-Tu.GTP complex up to the GTP hydrolysis stage on the ribosome. In Geobacillus thermodenitrificans (strain NG80-2), this protein is Elongation factor Ts.